The primary structure comprises 294 residues: Ribosomal RNA small subunit methyltransferase A (294 aa).

The S-adenosyl-L-methionine site is built by asparagine 33, leucine 35, glycine 60, glutamate 81, aspartate 106, and asparagine 131.

It belongs to the class I-like SAM-binding methyltransferase superfamily. rRNA adenine N(6)-methyltransferase family. RsmA subfamily.

It is found in the cytoplasm. The catalysed reaction is adenosine(1518)/adenosine(1519) in 16S rRNA + 4 S-adenosyl-L-methionine = N(6)-dimethyladenosine(1518)/N(6)-dimethyladenosine(1519) in 16S rRNA + 4 S-adenosyl-L-homocysteine + 4 H(+). Specifically dimethylates two adjacent adenosines (A1518 and A1519) in the loop of a conserved hairpin near the 3'-end of 16S rRNA in the 30S particle. May play a critical role in biogenesis of 30S subunits. The protein is Ribosomal RNA small subunit methyltransferase A of Lactococcus lactis subsp. lactis (strain IL1403) (Streptococcus lactis).